The sequence spans 335 residues: Anthranilate phosphoribosyltransferase (335 aa).

5-phospho-alpha-D-ribose 1-diphosphate contacts are provided by residues Gly-79, 82–83, Thr-87, 89–92, 107–115, and Ser-119; these read GD, NIST, and KHGSRSVSS. Gly-79 contributes to the anthranilate binding site. A Mg(2+)-binding site is contributed by Ser-91. Anthranilate is bound at residue Arg-165. Mg(2+) is bound by residues Asp-223 and Glu-224.

Belongs to the anthranilate phosphoribosyltransferase family. As to quaternary structure, homodimer. Mg(2+) serves as cofactor.

The catalysed reaction is N-(5-phospho-beta-D-ribosyl)anthranilate + diphosphate = 5-phospho-alpha-D-ribose 1-diphosphate + anthranilate. It participates in amino-acid biosynthesis; L-tryptophan biosynthesis; L-tryptophan from chorismate: step 2/5. Its function is as follows. Catalyzes the transfer of the phosphoribosyl group of 5-phosphorylribose-1-pyrophosphate (PRPP) to anthranilate to yield N-(5'-phosphoribosyl)-anthranilate (PRA). This chain is Anthranilate phosphoribosyltransferase, found in Helicobacter pylori (strain G27).